Here is a 141-residue protein sequence, read N- to C-terminus: Large ribosomal subunit protein uL11 (141 aa).

The protein belongs to the universal ribosomal protein uL11 family. In terms of assembly, part of the ribosomal stalk of the 50S ribosomal subunit. Interacts with L10 and the large rRNA to form the base of the stalk. L10 forms an elongated spine to which L12 dimers bind in a sequential fashion forming a multimeric L10(L12)X complex. In terms of processing, one or more lysine residues are methylated.

Functionally, forms part of the ribosomal stalk which helps the ribosome interact with GTP-bound translation factors. The polypeptide is Large ribosomal subunit protein uL11 (Campylobacter lari (strain RM2100 / D67 / ATCC BAA-1060)).